The sequence spans 356 residues: Phenylalanine--tRNA ligase alpha subunit (356 aa).

Residue E260 coordinates Mg(2+).

It belongs to the class-II aminoacyl-tRNA synthetase family. Phe-tRNA synthetase alpha subunit type 1 subfamily. Tetramer of two alpha and two beta subunits. Mg(2+) is required as a cofactor.

Its subcellular location is the cytoplasm. The enzyme catalyses tRNA(Phe) + L-phenylalanine + ATP = L-phenylalanyl-tRNA(Phe) + AMP + diphosphate + H(+). This is Phenylalanine--tRNA ligase alpha subunit from Gluconacetobacter diazotrophicus (strain ATCC 49037 / DSM 5601 / CCUG 37298 / CIP 103539 / LMG 7603 / PAl5).